A 213-amino-acid polypeptide reads, in one-letter code: Uridine kinase (213 aa).

15–22 (GASASGKS) is a binding site for ATP.

The protein belongs to the uridine kinase family.

Its subcellular location is the cytoplasm. The enzyme catalyses uridine + ATP = UMP + ADP + H(+). It carries out the reaction cytidine + ATP = CMP + ADP + H(+). Its pathway is pyrimidine metabolism; CTP biosynthesis via salvage pathway; CTP from cytidine: step 1/3. It participates in pyrimidine metabolism; UMP biosynthesis via salvage pathway; UMP from uridine: step 1/1. In Erwinia tasmaniensis (strain DSM 17950 / CFBP 7177 / CIP 109463 / NCPPB 4357 / Et1/99), this protein is Uridine kinase.